The primary structure comprises 510 residues: MADTYVGSIDQGTTGTRFMVFDHSGQVVANAYEKHEQIYPNPGWVEHDPIEIWENTKEVVTRGLEEAGLDAEQLEALGVTNQRETTIVWDEASGKPVHNALVWQDRRTTDRVEEIQEAGKVEMIREKTGLECDAYFSATKTEWILDNAEPLKMQASRGGDVRDRAEDGELLMGTIDSWLIQNLTGNHITDVTNASRTMLYNIRELEWDDELLEEFRVPRSMVPEVRPSSDDEYYGHTDADGFLGAEIPVAGALGDQQAAMFGQTCFDEGDAKNTYGTGSFYLMNTGTDAVASDHGLLTTIGFQMSGEPVQYALEGSIFVTGAAIEFLEDVDLINNAAQTAELASSVDSTDGVYMVPAFTGLGAPHWDGRARGTLVGMTRGTEKEHIVRATLESIGYQTRDVAEAMEADSGIETTSLRVDGGAVKNNFLCQLQSDILQTDIVRPVVDETTALGSAYAAGLAVGYWDTVDELRDNWQVDREFESEMDSADANTMYDRWDDAVERSLDWAQEE.

T13 is a binding site for ADP. Residues T13 and T14 each coordinate ATP. Residue T13 coordinates sn-glycerol 3-phosphate. Position 17 (R17) interacts with ADP. Sn-glycerol 3-phosphate contacts are provided by R83, E84, Y135, and D255. Residues R83, E84, Y135, D255, and Q256 each coordinate glycerol. ADP contacts are provided by T277, G321, G421, and N425. T277, G321, and G421 together coordinate ATP.

It belongs to the FGGY kinase family.

The enzyme catalyses glycerol + ATP = sn-glycerol 3-phosphate + ADP + H(+). The protein operates within polyol metabolism; glycerol degradation via glycerol kinase pathway; sn-glycerol 3-phosphate from glycerol: step 1/1. Functionally, key enzyme in the regulation of glycerol uptake and metabolism. Catalyzes the phosphorylation of glycerol to yield sn-glycerol 3-phosphate. In Haloquadratum walsbyi (strain DSM 16790 / HBSQ001), this protein is Glycerol kinase.